We begin with the raw amino-acid sequence, 358 residues long: 7,8-didemethyl-8-hydroxy-5-deazariboflavin synthase (358 aa).

The Radical SAM core domain maps to 35–275 (ITYSKNVFIP…DDISIQIPPN (241 aa)). 3 residues coordinate [4Fe-4S] cluster: Cys49, Cys53, and Cys56.

This sequence belongs to the radical SAM superfamily. CofG family. Consists of two subunits, CofG and CofH. It depends on [4Fe-4S] cluster as a cofactor.

The enzyme catalyses 5-amino-5-(4-hydroxybenzyl)-6-(D-ribitylimino)-5,6-dihydrouracil + S-adenosyl-L-methionine = 7,8-didemethyl-8-hydroxy-5-deazariboflavin + 5'-deoxyadenosine + L-methionine + NH4(+) + H(+). It participates in cofactor biosynthesis; coenzyme F0 biosynthesis. In terms of biological role, catalyzes the radical-mediated synthesis of 7,8-didemethyl-8-hydroxy-5-deazariboflavin (FO) from 5-amino-5-(4-hydroxybenzyl)-6-(D-ribitylimino)-5,6-dihydrouracil. This chain is 7,8-didemethyl-8-hydroxy-5-deazariboflavin synthase (cofG), found in Methanocaldococcus jannaschii (strain ATCC 43067 / DSM 2661 / JAL-1 / JCM 10045 / NBRC 100440) (Methanococcus jannaschii).